The chain runs to 67 residues: DNA-directed RNA polymerase subunit omega (67 aa).

This sequence belongs to the RNA polymerase subunit omega family. In terms of assembly, the RNAP catalytic core consists of 2 alpha, 1 beta, 1 beta' and 1 omega subunit. When a sigma factor is associated with the core the holoenzyme is formed, which can initiate transcription.

The enzyme catalyses RNA(n) + a ribonucleoside 5'-triphosphate = RNA(n+1) + diphosphate. Functionally, promotes RNA polymerase assembly. Latches the N- and C-terminal regions of the beta' subunit thereby facilitating its interaction with the beta and alpha subunits. The polypeptide is DNA-directed RNA polymerase subunit omega (Burkholderia multivorans (strain ATCC 17616 / 249)).